A 168-amino-acid chain; its full sequence is Crossover junction endodeoxyribonuclease RuvC (168 aa).

Residues Asp7, Glu66, and Asp138 contribute to the active site. Asp7, Glu66, and Asp138 together coordinate Mg(2+).

This sequence belongs to the RuvC family. In terms of assembly, homodimer which binds Holliday junction (HJ) DNA. The HJ becomes 2-fold symmetrical on binding to RuvC with unstacked arms; it has a different conformation from HJ DNA in complex with RuvA. In the full resolvosome a probable DNA-RuvA(4)-RuvB(12)-RuvC(2) complex forms which resolves the HJ. It depends on Mg(2+) as a cofactor.

It is found in the cytoplasm. It carries out the reaction Endonucleolytic cleavage at a junction such as a reciprocal single-stranded crossover between two homologous DNA duplexes (Holliday junction).. Functionally, the RuvA-RuvB-RuvC complex processes Holliday junction (HJ) DNA during genetic recombination and DNA repair. Endonuclease that resolves HJ intermediates. Cleaves cruciform DNA by making single-stranded nicks across the HJ at symmetrical positions within the homologous arms, yielding a 5'-phosphate and a 3'-hydroxyl group; requires a central core of homology in the junction. The consensus cleavage sequence is 5'-(A/T)TT(C/G)-3'. Cleavage occurs on the 3'-side of the TT dinucleotide at the point of strand exchange. HJ branch migration catalyzed by RuvA-RuvB allows RuvC to scan DNA until it finds its consensus sequence, where it cleaves and resolves the cruciform DNA. This is Crossover junction endodeoxyribonuclease RuvC from Cereibacter sphaeroides (strain ATCC 17029 / ATH 2.4.9) (Rhodobacter sphaeroides).